A 92-amino-acid polypeptide reads, in one-letter code: Large ribosomal subunit protein bL25 (92 aa).

It belongs to the bacterial ribosomal protein bL25 family. As to quaternary structure, part of the 50S ribosomal subunit; part of the 5S rRNA/L5/L18/L25 subcomplex. Contacts the 5S rRNA. Binds to the 5S rRNA independently of L5 and L18.

Its function is as follows. This is one of the proteins that binds to the 5S RNA in the ribosome where it forms part of the central protuberance. The chain is Large ribosomal subunit protein bL25 from Vibrio vulnificus (strain CMCP6).